A 2281-amino-acid chain; its full sequence is Protein Ycf2 (2281 aa).

Residue 1635 to 1642 participates in ATP binding; it reads GSIGSGRS.

This sequence belongs to the Ycf2 family.

It localises to the plastid. Its subcellular location is the chloroplast stroma. In terms of biological role, probable ATPase of unknown function. Its presence in a non-photosynthetic plant (Epifagus virginiana) and experiments in tobacco indicate that it has an essential function which is probably not related to photosynthesis. The sequence is that of Protein Ycf2 from Coffea arabica (Arabian coffee).